We begin with the raw amino-acid sequence, 121 residues long: Large ribosomal subunit protein bL12 (121 aa).

The protein belongs to the bacterial ribosomal protein bL12 family. Homodimer. Part of the ribosomal stalk of the 50S ribosomal subunit. Forms a multimeric L10(L12)X complex, where L10 forms an elongated spine to which 2 to 4 L12 dimers bind in a sequential fashion. Binds GTP-bound translation factors.

Its function is as follows. Forms part of the ribosomal stalk which helps the ribosome interact with GTP-bound translation factors. Is thus essential for accurate translation. The sequence is that of Large ribosomal subunit protein bL12 from Clostridium perfringens (strain ATCC 13124 / DSM 756 / JCM 1290 / NCIMB 6125 / NCTC 8237 / Type A).